Reading from the N-terminus, the 270-residue chain is 3-methyl-2-oxobutanoate hydroxymethyltransferase (270 aa).

Residues D41 and D80 each coordinate Mg(2+). 3-methyl-2-oxobutanoate contacts are provided by residues 41–42 (DS), D80, and K109. Residue E111 participates in Mg(2+) binding. E178 (proton acceptor) is an active-site residue.

Belongs to the PanB family. As to quaternary structure, homodecamer; pentamer of dimers. The cofactor is Mg(2+).

Its subcellular location is the cytoplasm. The enzyme catalyses 3-methyl-2-oxobutanoate + (6R)-5,10-methylene-5,6,7,8-tetrahydrofolate + H2O = 2-dehydropantoate + (6S)-5,6,7,8-tetrahydrofolate. It functions in the pathway cofactor biosynthesis; (R)-pantothenate biosynthesis; (R)-pantoate from 3-methyl-2-oxobutanoate: step 1/2. Catalyzes the reversible reaction in which hydroxymethyl group from 5,10-methylenetetrahydrofolate is transferred onto alpha-ketoisovalerate to form ketopantoate. The chain is 3-methyl-2-oxobutanoate hydroxymethyltransferase from Thermotoga maritima (strain ATCC 43589 / DSM 3109 / JCM 10099 / NBRC 100826 / MSB8).